The primary structure comprises 383 residues: UDP-D-xylose:L-fucose alpha-1,3-D-xylosyltransferase 3 (383 aa).

At 1 to 20 (MAQQSQRPISNRHISLLNRN) the chain is on the cytoplasmic side. Residues 21–41 (GLILLLLLALFVILGVFLPLT) form a helical; Signal-anchor for type II membrane protein membrane-spanning segment. Topologically, residues 42 to 383 (KSSLFMFPNT…KNRGKKHKLP (342 aa)) are lumenal. Residues Asn-50, Asn-82, and Asn-157 are each glycosylated (N-linked (GlcNAc...) asparagine). The DXD motif motif lies at 180–182 (DVD). Asn-212, Asn-258, Asn-301, Asn-306, Asn-357, and Asn-364 each carry an N-linked (GlcNAc...) asparagine glycan.

It belongs to the glycosyltransferase 77 family. The cofactor is Mn(2+). Mg(2+) serves as cofactor. Post-translationally, glycosylated. Expressed around trichome support cells in the adaxial epidermis of rosette leaves, in cauline leaves, petals and both the proximal and distal ends of siliques.

The protein localises to the golgi apparatus membrane. Its function is as follows. Catalyzes the transfer of D-xylose from UDP-alpha-D-xylose onto L-fucose. Probably involved in the biosynthesis of rhamnogalacturonan II (RG-II) through xylosylation of the internal fucose moiety of the A-chain of RG-II, a structurally complex pectic polysaccharide of the primary cell wall. RG-II is essential for the cell wall integrity of rapidly growing tissues such as roots and pollen tube growth and elongation. The chain is UDP-D-xylose:L-fucose alpha-1,3-D-xylosyltransferase 3 from Arabidopsis thaliana (Mouse-ear cress).